Consider the following 78-residue polypeptide: Small ribosomal subunit protein bS18 (78 aa).

The protein belongs to the bacterial ribosomal protein bS18 family. Part of the 30S ribosomal subunit. Forms a tight heterodimer with protein bS6.

In terms of biological role, binds as a heterodimer with protein bS6 to the central domain of the 16S rRNA, where it helps stabilize the platform of the 30S subunit. The sequence is that of Small ribosomal subunit protein bS18 from Limosilactobacillus fermentum (strain NBRC 3956 / LMG 18251) (Lactobacillus fermentum).